The sequence spans 868 residues: Dolichyl-phosphooligosaccharide-protein glycotransferase 3 (868 aa).

Residues 1–16 are Cytoplasmic-facing; that stretch reads MQNAESWFKKYWHLSV. The chain crosses the membrane as a helical span at residues 17-36; that stretch reads LVIAALISVKLRILNPWNSV. The Extracellular segment spans residues 37 to 101; it reads FTWTVRLGGN…IAGIIFSATS (65 aa). Residues 45–47 carry the DXD motif 1 motif; that stretch reads GND. Residue aspartate 47 coordinates Mn(2+). Histidine 81 lines the a glycophospholipid pocket. Residues 102-131 form a helical membrane-spanning segment; the sequence is GESLRAVLAFIPAIGGVLAILPVYLLTREV. Topologically, residues 132-133 are cytoplasmic; that stretch reads FD. The chain crosses the membrane as a helical span at residues 134–153; that stretch reads KRAAVIAAFLIAIVPGQFLQ. Residues 154-162 are Extracellular-facing; it reads RSILGFNDH. Position 161 (aspartate 161) interacts with Mn(2+). The short motif at 161–163 is the DXD motif 2 element; sequence DHH. Histidine 162 serves as a coordination point for a glycophospholipid. Histidine 163 contacts Mn(2+). Residues 163–184 form a helical membrane-spanning segment; sequence HIWEAFWQVSALGTFLLAYNRW. The Cytoplasmic portion of the chain corresponds to 185-199; the sequence is KGHDLSHNLTARQMA. The helical transmembrane segment at 200 to 212 threads the bilayer; it reads YPVIAGITIGLYV. The Extracellular segment spans residues 213 to 215; it reads LSW. The helical transmembrane segment at 216 to 238 threads the bilayer; that stretch reads GAGFIIAPIILAFMFFAFVLAGF. At 239–241 the chain is on the cytoplasmic side; it reads VNA. Residues 242–262 form a helical membrane-spanning segment; sequence DRKNLSLVAVVTFAVSALIYL. The Extracellular portion of the chain corresponds to 263 to 279; it reads PFAFNYPGFSTIFYSPF. The chain crosses the membrane as a helical span at residues 280–303; that stretch reads QLLVLLGSAVIAAAFYQIEKWNDV. The Cytoplasmic segment spans residues 304–312; the sequence is GFFERVGLG. Residues 313 to 330 form a helical membrane-spanning segment; the sequence is RKGMPLAVIVLTALIMGL. Over 331–373 the chain is Extracellular; it reads FFVISPDFARNLLSVVRVVQPKGGALTIAEVYPFFFTHNGEFT. Residues 357-360 carry the TIXE motif motif; sequence TIAE. The helical transmembrane segment at 374–396 threads the bilayer; that stretch reads LTNAVLHFGALFFFGMAGILYSA. At 397–404 the chain is on the cytoplasmic side; sequence YRFLKRRS. The chain crosses the membrane as a helical span at residues 405–423; that stretch reads FPEMALLIWAIAMFIALWG. At 424 to 427 the chain is on the extracellular side; the sequence is QNRF. A glycophospholipid is bound at residue arginine 426. Residues 428–452 traverse the membrane as a helical segment; sequence AYYFAAVSAVYSALALSVVFDKLHL. Topologically, residues 453–468 are cytoplasmic; the sequence is YRALENAIGARNKLSY. The helical transmembrane segment at 469 to 494 threads the bilayer; the sequence is FRVAFALLIALAAIYPTYILADAQSS. Over 495–868 the chain is Extracellular; that stretch reads YAGGPNKQWY…QNGEIIQLDL (374 aa). The tract at residues 550-552 is interacts with target acceptor peptide in protein substrate; sequence WWD. The WWDYG motif signature appears at 550–554; it reads WWDYG. The DKi motif motif lies at 613–622; that stretch reads EMETGKYYAM.

This sequence belongs to the STT3 family. The cofactor is Mg(2+). Mn(2+) is required as a cofactor. It depends on Zn(2+) as a cofactor.

Its subcellular location is the cell membrane. The catalysed reaction is an archaeal dolichyl phosphooligosaccharide + [protein]-L-asparagine = an archaeal dolichyl phosphate + a glycoprotein with the oligosaccharide chain attached by N-beta-D-glycosyl linkage to a protein L-asparagine.. It functions in the pathway protein modification; protein glycosylation. Functionally, oligosaccharyl transferase (OST) that catalyzes the initial transfer of a defined glycan (a glucose-linked heptasaccharide composed of 3 Glc, 2 Man, 2 Gal and a sulfate for A.fulgidus AglB-L) from the lipid carrier dolichol-monophosphate to an asparagine residue within an Asn-X-Ser/Thr consensus motif in nascent polypeptide chains, the first step in protein N-glycosylation. The sequence is that of Dolichyl-phosphooligosaccharide-protein glycotransferase 3 (aglB3) from Archaeoglobus fulgidus (strain ATCC 49558 / DSM 4304 / JCM 9628 / NBRC 100126 / VC-16).